Reading from the N-terminus, the 288-residue chain is Polyisoprenoid diphosphate/phosphate phosphohydrolase PLPP6 (288 aa).

Residues Met1–Pro82 form a disordered region. Residues Met1–Pro127 are Cytoplasmic-facing. Residues Leu128 to Cys148 form a helical membrane-spanning segment. The Lumenal portion of the chain corresponds to Leu149–Met161. The helical transmembrane segment at Leu162–Val182 threads the bilayer. Residues Lys179–Pro187 form a phosphatase sequence motif I region. Residues Arg183–His223 lie on the Cytoplasmic side of the membrane. The tract at residues Pro206–His209 is phosphatase sequence motif II. Residue His209 is the Proton donors of the active site. Residues Leu224 to Ser244 form a helical membrane-spanning segment. The tract at residues Ser244 to Asp255 is phosphatase sequence motif III. At Arg245 to Asp255 the chain is on the lumenal side. His251 (nucleophile) is an active-site residue. A helical membrane pass occupies residues Val256–Ser276. The Cytoplasmic portion of the chain corresponds to Pro277–His288.

The protein belongs to the PA-phosphatase related phosphoesterase family.

It is found in the endoplasmic reticulum membrane. The protein localises to the nucleus envelope. The protein resides in the nucleus inner membrane. It carries out the reaction presqualene diphosphate + H2O = presqualene phosphate + phosphate + H(+). The enzyme catalyses presqualene phosphate + H2O = presqualene alcohol + phosphate. It catalyses the reaction (2E,6E)-farnesyl diphosphate + H2O = (2E,6E)-farnesyl phosphate + phosphate + H(+). The catalysed reaction is (2E,6E)-farnesyl phosphate + H2O = (2E,6E)-farnesol + phosphate. It carries out the reaction (2E,6E,10E)-geranylgeranyl diphosphate + H2O = (2E,6E,10E)-geranylgeranyl phosphate + phosphate + H(+). The enzyme catalyses (2E,6E,10E)-geranylgeranyl phosphate + H2O = (2E,6E,10E)-geranylgeraniol + phosphate. It catalyses the reaction (2E)-geranyl diphosphate + H2O = (2E)-geranyl phosphate + phosphate + H(+). The catalysed reaction is (2E)-geranyl phosphate + H2O = (2E)-geraniol + phosphate. It carries out the reaction 1,2-dihexadecanoyl-sn-glycero-3-phosphate + H2O = 1,2-dihexadecanoyl-sn-glycerol + phosphate. Magnesium-independent polyisoprenoid diphosphatase that catalyzes the sequential dephosphorylation of presqualene, farnesyl, geranyl and geranylgeranyl diphosphates. May regulate the biosynthesis of cholesterol and related sterols by dephosphorylating presqualene and farnesyl diphosphate, two key intermediates in this biosynthetic pathway. May also play a role in protein prenylation by acting on farnesyl diphosphate and its derivative geranylgeranyl diphosphate, two precursors for the addition of isoprenoid anchors to membrane proteins. Has a lower activity towards phosphatidic acid (PA), but through phosphatidic acid dephosphorylation may participate in the biosynthesis of phospholipids and triacylglycerols. May also act on ceramide-1-P, lysophosphatidic acid (LPA) and sphing-4-enine 1-phosphate/sphingosine-1-phosphate. This chain is Polyisoprenoid diphosphate/phosphate phosphohydrolase PLPP6 (plpp6), found in Danio rerio (Zebrafish).